The following is a 620-amino-acid chain: Translation initiation factor IF-2 (620 aa).

The 170-residue stretch at 119-288 (ERPPIVTIMG…IILISELENL (170 aa)) folds into the tr-type G domain. Residues 128 to 135 (GHVDHGKT) are G1. 128 to 135 (GHVDHGKT) contacts GTP. The tract at residues 153–157 (GITQA) is G2. Positions 175-178 (DTPG) are G3. Residues 175–179 (DTPGH) and 229–232 (NKID) each bind GTP. Positions 229–232 (NKID) are G4. The G5 stretch occupies residues 265 to 267 (SAI).

It belongs to the TRAFAC class translation factor GTPase superfamily. Classic translation factor GTPase family. IF-2 subfamily.

The protein resides in the cytoplasm. Its function is as follows. One of the essential components for the initiation of protein synthesis. Protects formylmethionyl-tRNA from spontaneous hydrolysis and promotes its binding to the 30S ribosomal subunits. Also involved in the hydrolysis of GTP during the formation of the 70S ribosomal complex. In Mycoplasma mycoides subsp. mycoides SC (strain CCUG 32753 / NCTC 10114 / PG1), this protein is Translation initiation factor IF-2.